The sequence spans 285 residues: Diphthine methyl ester synthase (285 aa).

Residues L9, D84, G87, 112 to 113 (SI), L163, V221, and H246 contribute to the S-adenosyl-L-methionine site.

This sequence belongs to the diphthine synthase family.

It localises to the cytoplasm. The catalysed reaction is 2-[(3S)-amino-3-carboxypropyl]-L-histidyl-[translation elongation factor 2] + 4 S-adenosyl-L-methionine = diphthine methyl ester-[translation elongation factor 2] + 4 S-adenosyl-L-homocysteine + 3 H(+). It functions in the pathway protein modification; peptidyl-diphthamide biosynthesis. In terms of biological role, S-adenosyl-L-methionine-dependent methyltransferase that catalyzes four methylations of the modified target histidine residue in translation elongation factor 2 (EF-2), to form an intermediate called diphthine methyl ester. The four successive methylation reactions represent the second step of diphthamide biosynthesis. The polypeptide is Diphthine methyl ester synthase (dph5) (Emericella nidulans (strain FGSC A4 / ATCC 38163 / CBS 112.46 / NRRL 194 / M139) (Aspergillus nidulans)).